A 120-amino-acid polypeptide reads, in one-letter code: MTECDWEKKSTSASNSDTEMKPELPPCVNPGNPVFSCMLDPKTLHTTTSLSKPKMIMYKTNSSNYGEFLPMPQFFPCYYTPREQVFSSHIRATGFYQNNTLNTAPDRTRTLDFPNFQHTL.

The span at 1 to 10 (MTECDWEKKS) shows a compositional bias: basic and acidic residues. A disordered region spans residues 1-25 (MTECDWEKKSTSASNSDTEMKPELP).

This sequence belongs to the PIERCE2 family. As to quaternary structure, microtubule inner protein component of sperm flagellar doublet microtubules. Interacts with CFAP53, ODAD1 and ODAD3; the interactions link the outer dynein arms docking complex (ODA-DC) to the internal microtubule inner proteins (MIP) in cilium axoneme. As to expression, expressed in trachea multiciliated cells.

The protein resides in the cytoplasm. Its subcellular location is the cytoskeleton. It localises to the cilium axoneme. The protein localises to the flagellum axoneme. In terms of biological role, microtubule inner protein involved in the attachment of outer dynein arms (ODAs) to dynein-decorated doublet microtubules (DMTs) in cilia axoneme, which is required for motile cilia beating. The polypeptide is Piercer of microtubule wall 2 protein (PIERCE2) (Bos taurus (Bovine)).